We begin with the raw amino-acid sequence, 476 residues long: ENTH domain-containing protein C794.11c (476 aa).

In terms of domain architecture, ENTH spans 30–154 (YTSMEARVRE…VELLNDSERI (125 aa)). Disordered stretches follow at residues 157 to 198 (ERKR…GSYR), 213 to 308 (NGYH…GFGD), 410 to 429 (QAGLGLTSQQPTAAKSSGSN), and 444 to 472 (VHQENSTRERVVSSSSEPVSKTQNFLDND). Residue Ser-173 is modified to Phosphoserine. Composition is skewed to low complexity over residues 178-198 (RISTSSKSRFPSFGSSRGSYR) and 213-222 (NGYHDSSSMS). Ser-228 is modified (phosphoserine). Residues 229 to 240 (DNDVEEYNEDGD) are compositionally biased toward acidic residues. Residue Tyr-235 is modified to Phosphotyrosine. Phosphoserine occurs at positions 243 and 244. Residues 262–271 (QSDKAPEQPK) are compositionally biased toward basic and acidic residues. The segment covering 444-454 (VHQENSTRERV) has biased composition (basic and acidic residues). Ser-459 is modified (phosphoserine).

The sequence is that of ENTH domain-containing protein C794.11c from Schizosaccharomyces pombe (strain 972 / ATCC 24843) (Fission yeast).